Reading from the N-terminus, the 52-residue chain is Phospholamban (52 aa).

Met-1 is subject to N-acetylmethionine. The Cytoplasmic portion of the chain corresponds to Met-1–Leu-31. Phosphoserine; by PKA is present on Ser-16. Thr-17 carries the post-translational modification Phosphothreonine; by CaMK2. Residues Phe-32–Leu-52 traverse the membrane as a helical segment. Cys-36 is lipidated: S-palmitoyl cysteine.

This sequence belongs to the phospholamban family. Homopentamer. Can also form heterooligomers with other sarcoplasmic/endoplasmic reticulum calcium ATPase (SERCA) regulators ARLN, ERLN, SLN and STRIT1/DWORF. Monomer. Interacts with HAX1. Interacts as a monomer with ATP2A2; the interaction decreases ATP2A2 Ca(2+) affinity. Interacts with VMP1; VMP1 competes with PLN and SLN to prevent them from forming an inhibitory complex with ATP2A2. Interacts with S100A1 in a Ca(2+)-dependent manner. Post-translationally, phosphorylated at Thr-17 by CaMK2, and in response to beta-adrenergic stimulation. Phosphorylation by DMPK may stimulate sarcoplasmic reticulum calcium uptake in cardiomyocytes. Phosphorylation by PKA abolishes the inhibition of ATP2A2-mediated calcium uptake. Palmitoylated by ZDHHC16, promoting formation of the homopentamer. In terms of processing, in elongated spermatids, proteolytically cleaved by SPPL2C which modulates intracellular Ca(2+) homeostasis. As to expression, expressed in testis (at protein level). In brain, expressed specifically in GABAergic GAD67+ neurons of the thalamic reticular nucleus where it colocalizes with ATP2A2/SERCA2 (at protein level). Expressed in the bladder and in the atria and ventricles of the heart.

The protein localises to the endoplasmic reticulum membrane. Its subcellular location is the sarcoplasmic reticulum membrane. The protein resides in the mitochondrion membrane. It is found in the membrane. In terms of biological role, reversibly inhibits the activity of ATP2A2/SERCA2 in cardiac sarcoplasmic reticulum by decreasing the apparent affinity of the ATPase for Ca(2+). Binds preferentially to the ATP-bound E1 conformational form of ATP2A2 which predominates at low Ca(2+) concentrations during the diastolic phase of the cardiac cycle. Inhibits ATP2A2 Ca(2+) affinity by disrupting its allosteric activation by ATP. Modulates the contractility of the heart muscle in response to physiological stimuli via its effects on ATP2A2. Modulates calcium re-uptake during muscle relaxation and plays an important role in calcium homeostasis in the heart muscle. The degree of ATP2A2 inhibition depends on the oligomeric state of PLN. ATP2A2 inhibition is alleviated by PLN phosphorylation. Also inhibits the activity of ATP2A3/SERCA3. Controls intracellular Ca(2+) levels in elongated spermatids and may play a role in germ cell differentiation. In the thalamic reticular nucleus of the brain, plays a role in the regulation of sleep patterns and executive functioning. The sequence is that of Phospholamban from Mus musculus (Mouse).